The following is a 168-amino-acid chain: Disulfide bond formation protein B 2 (168 aa).

Topologically, residues 1 to 9 (MSLACLRSF) are cytoplasmic. Residues 10 to 26 (FLPALLASTAVLVASFH) form a helical membrane-spanning segment. Residues 27–44 (LESVVGLVPCALCFSQRL) are Periplasmic-facing. Cysteine 36 and cysteine 39 form a disulfide bridge. A helical membrane pass occupies residues 45–61 (MLGVYALVCLAALVHSP). Residues 62–67 (AARGRR) are Cytoplasmic-facing. Residues 68 to 85 (AYAGLALASAFGGALLAG) form a helical membrane-spanning segment. At 86-140 (RHVWLQGDPQVVDGCHLPVEQVLQRPLGEILQMFLLGSPDCVSISWSFLDLTLPE) the chain is on the periplasmic side. Residues cysteine 100 and cysteine 126 are joined by a disulfide bond. A helical membrane pass occupies residues 141-159 (WSLLAFLLLAAMPLSWLVA). Residues 160–168 (YRFRKRAMA) lie on the Cytoplasmic side of the membrane.

This sequence belongs to the DsbB family.

The protein resides in the cell inner membrane. In terms of biological role, required for disulfide bond formation in some periplasmic proteins. Acts by oxidizing the DsbA protein. The protein is Disulfide bond formation protein B 2 of Pseudomonas entomophila (strain L48).